The following is a 334-amino-acid chain: MKKIRPLTEADVTAESAFFMQRRQVLKALGISAAALSLPSTAQADLFSWFKGNDRPKAPAGKPLEFSQPAAWRSDLALTPEDKVTGYNNFYEFGLDKADPAANAGSLKTEPWTLKISGEVAKPFTLDYDDLTHRFPLEERIYRMRCVEAWSMVVPWIGFPLYKLLAQAQPTSHAKYVAFETLYAPDDMPGQKDRFIGGGLKYPYVEGLRLDEAMHPLTLMTVGVYGKALPPQNGAPIRLIVPWKYGFKGIKSVVSIKLTRERPPTTWNLSAPNEYGFYANVNPHVDHPRWSQATERFIGSGGILDVQRQPTLLFNGYANEVASLYRGLNLRENF.

Positions 1-44 (MKKIRPLTEADVTAESAFFMQRRQVLKALGISAAALSLPSTAQA) form a signal peptide, tat-type signal. Residues Asn88, 91–92 (YE), Cys146, Thr181, Asn233, Arg238, and 249–251 (GIK) contribute to the Mo-molybdopterin site.

Belongs to the MsrP family. In terms of assembly, heterodimer of a catalytic subunit (MsrP) and a heme-binding subunit (MsrQ). It depends on Mo-molybdopterin as a cofactor. Post-translationally, predicted to be exported by the Tat system. The position of the signal peptide cleavage has not been experimentally proven.

The protein localises to the periplasm. It catalyses the reaction L-methionyl-[protein] + a quinone + H2O = L-methionyl-(S)-S-oxide-[protein] + a quinol. The catalysed reaction is L-methionyl-[protein] + a quinone + H2O = L-methionyl-(R)-S-oxide-[protein] + a quinol. Its function is as follows. Part of the MsrPQ system that repairs oxidized periplasmic proteins containing methionine sulfoxide residues (Met-O), using respiratory chain electrons. Thus protects these proteins from oxidative-stress damage caused by reactive species of oxygen and chlorine generated by the host defense mechanisms. MsrPQ is essential for the maintenance of envelope integrity under bleach stress, rescuing a wide series of structurally unrelated periplasmic proteins from methionine oxidation, including the primary periplasmic chaperone SurA and the lipoprotein Pal. The catalytic subunit MsrP is non-stereospecific, being able to reduce both (R-) and (S-) diastereoisomers of methionine sulfoxide. The protein is Protein-methionine-sulfoxide reductase catalytic subunit MsrP of Salmonella agona (strain SL483).